Reading from the N-terminus, the 191-residue chain is Small ribosomal subunit protein uS7 (191 aa).

It belongs to the universal ribosomal protein uS7 family. Part of the 30S ribosomal subunit.

In terms of biological role, one of the primary rRNA binding proteins, it binds directly to 16S rRNA where it nucleates assembly of the head domain of the 30S subunit. Is located at the subunit interface close to the decoding center. The protein is Small ribosomal subunit protein uS7 of Methanocaldococcus jannaschii (strain ATCC 43067 / DSM 2661 / JAL-1 / JCM 10045 / NBRC 100440) (Methanococcus jannaschii).